Reading from the N-terminus, the 220-residue chain is Ribosome biogenesis protein 15 (220 aa).

Residues 1 to 82 (MVKSTSKTST…KQANEKKSKD (82 aa)) form a disordered region. Over residues 9-30 (STKETVTKQPTEEKPIQEKEEL) the composition is skewed to basic and acidic residues. Residues 39–60 (SDEEDEKDEDEIEGLAASDDEQ) show a composition bias toward acidic residues. In terms of domain architecture, RRM spans 91 to 169 (GIIYVSRLPH…HLLQVRVLPK (79 aa)).

As to quaternary structure, component of the pre-66S ribosomal particle. Interacts with NOP7 and RRP1.

The protein resides in the cytoplasm. It localises to the nucleus. Its subcellular location is the nucleolus. Its function is as follows. Involved in the biogenesis of the 60S ribosomal subunit. Required for pre-rRNA processing and cytokinesis. Associates with the precursors of the 25S and 5.8S rRNAs. In Saccharomyces cerevisiae (strain ATCC 204508 / S288c) (Baker's yeast), this protein is Ribosome biogenesis protein 15.